Consider the following 147-residue polypeptide: UPF0306 protein YhbP (147 aa).

This sequence belongs to the UPF0306 family.

This is UPF0306 protein YhbP from Escherichia coli O8 (strain IAI1).